A 293-amino-acid polypeptide reads, in one-letter code: Putative peptidyl-prolyl cis-trans isomerase NifM (293 aa).

The PpiC domain occupies 142 to 244; the sequence is PARHKARHIL…IGFHVLFCES (103 aa).

It belongs to the PpiC/parvulin rotamase family.

The enzyme catalyses [protein]-peptidylproline (omega=180) = [protein]-peptidylproline (omega=0). Its function is as follows. Required for the activation and stabilization of the iron-component (NifH) of nitrogenase. Probable PPIase. The polypeptide is Putative peptidyl-prolyl cis-trans isomerase NifM (nifM) (Azotobacter chroococcum mcd 1).